The following is a 550-amino-acid chain: Methionine--tRNA ligase (550 aa).

A 'HIGH' region motif is present at residues 12-22 (PYANGPLHFGH). Zn(2+) is bound by residues Cys-144, Cys-147, Cys-157, and Cys-160. Residues 330–334 (QFSKS) carry the 'KMSKS' region motif. Lys-333 contacts ATP.

This sequence belongs to the class-I aminoacyl-tRNA synthetase family. MetG type 1 subfamily. As to quaternary structure, monomer. Zn(2+) serves as cofactor.

Its subcellular location is the cytoplasm. It catalyses the reaction tRNA(Met) + L-methionine + ATP = L-methionyl-tRNA(Met) + AMP + diphosphate. Its function is as follows. Is required not only for elongation of protein synthesis but also for the initiation of all mRNA translation through initiator tRNA(fMet) aminoacylation. This chain is Methionine--tRNA ligase, found in Chlamydia caviae (strain ATCC VR-813 / DSM 19441 / 03DC25 / GPIC) (Chlamydophila caviae).